A 364-amino-acid polypeptide reads, in one-letter code: DNA replication and repair protein RecF (364 aa).

Position 30–37 (30–37 (GNNGQGKT)) interacts with ATP.

This sequence belongs to the RecF family.

It localises to the cytoplasm. Functionally, the RecF protein is involved in DNA metabolism; it is required for DNA replication and normal SOS inducibility. RecF binds preferentially to single-stranded, linear DNA. It also seems to bind ATP. The sequence is that of DNA replication and repair protein RecF from Geobacter sp. (strain M21).